The sequence spans 672 residues: uncharacterized protein (672 aa).

The span at 1 to 10 (MAKSDGDDPL) shows a compositional bias: basic and acidic residues. The interval 1–40 (MAKSDGDDPLRPASPRLRSSRRHSLRYSAYTGGPDPLAPP) is disordered.

This is an uncharacterized protein from Mycobacterium tuberculosis (strain CDC 1551 / Oshkosh).